Consider the following 379-residue polypeptide: ATP phosphoribosyltransferase regulatory subunit (379 aa).

The protein belongs to the class-II aminoacyl-tRNA synthetase family. HisZ subfamily. As to quaternary structure, heteromultimer composed of HisG and HisZ subunits.

It localises to the cytoplasm. It functions in the pathway amino-acid biosynthesis; L-histidine biosynthesis; L-histidine from 5-phospho-alpha-D-ribose 1-diphosphate: step 1/9. Required for the first step of histidine biosynthesis. May allow the feedback regulation of ATP phosphoribosyltransferase activity by histidine. This chain is ATP phosphoribosyltransferase regulatory subunit, found in Gluconobacter oxydans (strain 621H) (Gluconobacter suboxydans).